The sequence spans 306 residues: Porphobilinogen deaminase (306 aa).

The residue at position 237 (C237) is an S-(dipyrrolylmethanemethyl)cysteine.

It belongs to the HMBS family. Monomer. Dipyrromethane is required as a cofactor.

It carries out the reaction 4 porphobilinogen + H2O = hydroxymethylbilane + 4 NH4(+). It participates in porphyrin-containing compound metabolism; protoporphyrin-IX biosynthesis; coproporphyrinogen-III from 5-aminolevulinate: step 2/4. Tetrapolymerization of the monopyrrole PBG into the hydroxymethylbilane pre-uroporphyrinogen in several discrete steps. The polypeptide is Porphobilinogen deaminase (Syntrophus aciditrophicus (strain SB)).